Consider the following 148-residue polypeptide: Protein ORM1 (148 aa).

The next 4 helical transmembrane spans lie at 12–32, 36–56, 89–109, and 111–131; these read WIIH…FPGV, WSWT…FHLI, FLII…HYDL, and MFSW…LPVT.

It to yeast YLR350W C-terminus.

It localises to the membrane. The polypeptide is Protein ORM1 (ORM1) (Saccharomyces pastorianus (strain ATCC 76670 / Carlsberg bottom yeast no.2 / CBS 1503 / CLIB 180 / NBRC 10610 / NRRL Y-1525) (Saaz-type lager yeast)).